The primary structure comprises 140 residues: D-ribose pyranase (140 aa).

H20 functions as the Proton donor in the catalytic mechanism. Residues D28, H99, and Y121–S123 each bind substrate.

It belongs to the RbsD / FucU family. RbsD subfamily. As to quaternary structure, homodecamer.

The protein resides in the cytoplasm. It catalyses the reaction beta-D-ribopyranose = beta-D-ribofuranose. The protein operates within carbohydrate metabolism; D-ribose degradation; D-ribose 5-phosphate from beta-D-ribopyranose: step 1/2. Catalyzes the interconversion of beta-pyran and beta-furan forms of D-ribose. This chain is D-ribose pyranase, found in Pseudothermotoga lettingae (strain ATCC BAA-301 / DSM 14385 / NBRC 107922 / TMO) (Thermotoga lettingae).